Consider the following 365-residue polypeptide: AP2/ERF and B3 domain-containing protein Os01g0141000 (365 aa).

Residues 1–24 are disordered; the sequence is MGVVSFSSTSSGASTATTESGGAV. The segment at residues 68 to 123 is a DNA-binding region (AP2/ERF); sequence RYKGVVPQPNGRWGAQIYERHARVWLGTFPDEEAAARAYDVAALRYRGRDAATNFP. The segment at residues 182–294 is a DNA-binding region (TF-B3); that stretch reads FEKAVTPSDV…KLLFIDCKKN (113 aa).

The protein resides in the nucleus. The protein is AP2/ERF and B3 domain-containing protein Os01g0141000 of Oryza sativa subsp. japonica (Rice).